A 653-amino-acid polypeptide reads, in one-letter code: Protein CBFA2T3 (653 aa).

Residues 1 to 10 show a composition bias toward basic and acidic residues; sequence MPASRLRDRA. The interval 1-109 is disordered; sequence MPASRLRDRA…HTHREDGPAT (109 aa). The tract at residues 1-127 is required for nucleolar targeting (in isoform 1); it reads MPASRLRDRA…CLKWSMVCLL (127 aa). The tract at residues 1 to 430 is mediates interaction with PDE7A (in isoform 2); it reads MPASRLRDRA…RRCQEADREE (430 aa). The interval 1-435 is mediates localization to the nucleus; sequence MPASRLRDRA…ADREELNHWA (435 aa). Residues 11-23 are compositionally biased toward low complexity; sequence ASSASGSTCGSMS. Over residues 75–86 the composition is skewed to pro residues; it reads STPPSMPPPPPA. The interaction with ZBTB33 stretch occupies residues 145–242; it reads PNGFSNGPAT…IPFLKANLPL (98 aa). Positions 171-266 constitute a TAFH domain; sequence ARQLSKLKRF…TPAQYLAQHE (96 aa). Residues 176–268 are interaction with HIF1A; the sequence is KLKRFLTTLQ…AQYLAQHEQL (93 aa). The tract at residues 284 to 342 is disordered; the sequence is LLEVNENGKRRTPDRTKENGSDRDPLHPEHLSKRPCTLNPAQRYSPSNGPPQPTPPPHY. Positions 289 to 315 are enriched in basic and acidic residues; sequence ENGKRRTPDRTKENGSDRDPLHPEHLS. Positions 331 to 341 are enriched in pro residues; it reads NGPPQPTPPPH. Residues 394–412 form a nervy homology region 2 (NHR2); essential for down-regulation of PFKFB3, PFKFB4 and PDK1 expression region; the sequence is EEWKHLNNLLNCIMDMVEK. Residues 434–446 are compositionally biased toward basic and acidic residues; the sequence is WARRYSDAEDTKK. The interval 434–472 is disordered; that stretch reads WARRYSDAEDTKKGPAPAAARPRSSSAGPEGPQLDVPRE. A compositionally biased stretch (low complexity) spans 447–462; that stretch reads GPAPAAARPRSSSAGP. Residues serine 457 and serine 459 each carry the phosphoserine modification. Phosphothreonine is present on threonine 479. The interval 485–506 is mediates interaction with PRKAR2A; sequence DIWRKAEEAVNEVKRQAMSELQ. The nervy homology region 3 (NHR3); essential for down-regulation of PFKFB3, PFKFB4 and PDK1 expression stretch occupies residues 485-533; the sequence is DIWRKAEEAVNEVKRQAMSELQKAVSDAERKAHELITTERAKMERALAE. Positions 488–543 form a coiled coil; sequence RKAEEAVNEVKRQAMSELQKAVSDAERKAHELITTERAKMERALAEAKRQASEDAL. Zn(2+) contacts are provided by cysteine 556, cysteine 559, cysteine 567, cysteine 570, cysteine 576, cysteine 580, histidine 588, and cysteine 592. The MYND-type zinc finger occupies 556–592; the sequence is CWNCGRKASETCSGCNAARYCGSFCQHRDWEKHHHVC. The tract at residues 603-653 is disordered; sequence VADPVPGPPEAAHSLGPSLPVGAASPSEAGSAGPSRPGSPSPPGPLDTVPR. Residues 622–638 are compositionally biased toward low complexity; that stretch reads PVGAASPSEAGSAGPSR. Serine 637 and serine 641 each carry phosphoserine. A Phosphothreonine modification is found at threonine 650.

This sequence belongs to the CBFA2T family. As to quaternary structure, homooligomer. Homotetramerization is mediated by nervy homology region 2 (NRH2). Can interact with RUNX1T1 and CBFA2T2; heterotetramerization between members of the CBFA2T family is proposed. Component of a TAL-1 complex composed at least of CBFA2T3, LDB1, TAL1 and TCF3. Interacts with ERBB4, HDAC1, HDAC2, HDAC3, HDAC6, HDAC8, NCOR1, NCOR2, and ZNF652. According to PubMed:12242670, may not interact with HDAC6. Interacts with PLXNA1, PLXNA3 and PRKAR1A. Isoform 2 interacts with PRKAR2A, PDE7A and probably PDE4A. Interacts with ZBTB4, ZBTB38 and ZBTB33. Interacts with HIF1A and EGLN1. Interacts with the AML1-MTG8/ETO fusion protein. In terms of tissue distribution, widely expressed with higher expression in heart, pancreas, skeletal muscle, spleen, thymus and peripheral blood leukocytes. Expressed in hematopoietic cells (at protein level).

It is found in the nucleus. The protein localises to the nucleolus. It localises to the nucleoplasm. The protein resides in the golgi apparatus membrane. Functionally, transcriptional corepressor which facilitates transcriptional repression via its association with DNA-binding transcription factors and recruitment of other corepressors and histone-modifying enzymes. Can repress the expression of MMP7 in a ZBTB33-dependent manner. Reduces the protein levels and stability of the transcriptinal regulator HIF1A; interacts with EGLN1 and promotes the HIF1A prolyl hydroxylation-dependent ubiquitination and proteasomal degradation pathway. Contributes to inhibition of glycolysis and stimulation of mitochondrial respiration by down-regulating the expression of glycolytic genes including PFKFB3, PFKFB4, PDK1, PFKP, LDHA and HK1 which are direct targets of HIF1A. Regulates the proliferation and the differentiation of erythroid progenitors by repressing the expression of TAL1 target genes. Plays a role in granulocyte differentiation. Its function is as follows. Isoform 2 functions as an A-kinase-anchoring protein. The sequence is that of Protein CBFA2T3 (CBFA2T3) from Homo sapiens (Human).